The following is a 192-amino-acid chain: Small ribosomal subunit protein uS5 (192 aa).

One can recognise an S5 DRBM domain in the interval 22–85; the sequence is LVDKLVTINR…DRAKRAMIRV (64 aa).

It belongs to the universal ribosomal protein uS5 family. As to quaternary structure, part of the 30S ribosomal subunit. Contacts proteins S4 and S8.

Functionally, with S4 and S12 plays an important role in translational accuracy. In terms of biological role, located at the back of the 30S subunit body where it stabilizes the conformation of the head with respect to the body. The protein is Small ribosomal subunit protein uS5 of Gluconacetobacter diazotrophicus (strain ATCC 49037 / DSM 5601 / CCUG 37298 / CIP 103539 / LMG 7603 / PAl5).